A 374-amino-acid chain; its full sequence is Carbamoyl phosphate synthase small chain (374 aa).

The segment at 1–186 is CPSase; that stretch reads MTEPAILVLE…DRNEWKRAAP (186 aa). L-glutamine is bound by residues S47, G237, and G239. Residues 189 to 374 form the Glutamine amidotransferase type-1 domain; the sequence is KVVAYDYGVK…RFITMMAAQS (186 aa). The Nucleophile role is filled by C265. Residues L266, Q269, N307, G309, and F310 each contribute to the L-glutamine site. Catalysis depends on residues H349 and E351.

This sequence belongs to the CarA family. As to quaternary structure, composed of two chains; the small (or glutamine) chain promotes the hydrolysis of glutamine to ammonia, which is used by the large (or ammonia) chain to synthesize carbamoyl phosphate. Tetramer of heterodimers (alpha,beta)4.

The catalysed reaction is hydrogencarbonate + L-glutamine + 2 ATP + H2O = carbamoyl phosphate + L-glutamate + 2 ADP + phosphate + 2 H(+). It catalyses the reaction L-glutamine + H2O = L-glutamate + NH4(+). It functions in the pathway amino-acid biosynthesis; L-arginine biosynthesis; carbamoyl phosphate from bicarbonate: step 1/1. It participates in pyrimidine metabolism; UMP biosynthesis via de novo pathway; (S)-dihydroorotate from bicarbonate: step 1/3. Functionally, small subunit of the glutamine-dependent carbamoyl phosphate synthetase (CPSase). CPSase catalyzes the formation of carbamoyl phosphate from the ammonia moiety of glutamine, carbonate, and phosphate donated by ATP, constituting the first step of 2 biosynthetic pathways, one leading to arginine and/or urea and the other to pyrimidine nucleotides. The small subunit (glutamine amidotransferase) binds and cleaves glutamine to supply the large subunit with the substrate ammonia. In Xylella fastidiosa (strain 9a5c), this protein is Carbamoyl phosphate synthase small chain.